Consider the following 209-residue polypeptide: Kynurenine formamidase (209 aa).

Substrate is bound at residue tryptophan 18. Residues histidine 48, histidine 52, and aspartate 54 each coordinate Zn(2+). Histidine 58 serves as the catalytic Proton donor/acceptor. The Zn(2+) site is built by histidine 160 and glutamate 172.

The protein belongs to the Cyclase 1 superfamily. KynB family. In terms of assembly, homodimer. It depends on Zn(2+) as a cofactor.

The catalysed reaction is N-formyl-L-kynurenine + H2O = L-kynurenine + formate + H(+). The protein operates within amino-acid degradation; L-tryptophan degradation via kynurenine pathway; L-kynurenine from L-tryptophan: step 2/2. Catalyzes the hydrolysis of N-formyl-L-kynurenine to L-kynurenine, the second step in the kynurenine pathway of tryptophan degradation. The sequence is that of Kynurenine formamidase from Paraburkholderia phymatum (strain DSM 17167 / CIP 108236 / LMG 21445 / STM815) (Burkholderia phymatum).